Here is a 300-residue protein sequence, read N- to C-terminus: Ribosomal RNA small subunit methyltransferase H (300 aa).

Residues 35-37, Asp55, Phe82, Asp100, and Gln107 contribute to the S-adenosyl-L-methionine site; that span reads GGH.

It belongs to the methyltransferase superfamily. RsmH family.

Its subcellular location is the cytoplasm. It catalyses the reaction cytidine(1402) in 16S rRNA + S-adenosyl-L-methionine = N(4)-methylcytidine(1402) in 16S rRNA + S-adenosyl-L-homocysteine + H(+). In terms of biological role, specifically methylates the N4 position of cytidine in position 1402 (C1402) of 16S rRNA. This Chlamydia trachomatis serovar A (strain ATCC VR-571B / DSM 19440 / HAR-13) protein is Ribosomal RNA small subunit methyltransferase H.